The following is a 508-amino-acid chain: Photosystem II CP47 reaction center protein (508 aa).

Helical transmembrane passes span 21 to 36 (AVHI…WAGS), 101 to 115 (IVFS…IWHW), 140 to 156 (GIHL…FGAF), 203 to 218 (IAAG…FHLS), 237 to 252 (VLSS…AFVV), and 457 to 472 (SFAL…HGAR).

The protein belongs to the PsbB/PsbC family. PsbB subfamily. In terms of assembly, PSII is composed of 1 copy each of membrane proteins PsbA, PsbB, PsbC, PsbD, PsbE, PsbF, PsbH, PsbI, PsbJ, PsbK, PsbL, PsbM, PsbT, PsbX, PsbY, PsbZ, Psb30/Ycf12, at least 3 peripheral proteins of the oxygen-evolving complex and a large number of cofactors. It forms dimeric complexes. It depends on Binds multiple chlorophylls. PSII binds additional chlorophylls, carotenoids and specific lipids. as a cofactor.

It localises to the plastid. It is found in the chloroplast thylakoid membrane. Its function is as follows. One of the components of the core complex of photosystem II (PSII). It binds chlorophyll and helps catalyze the primary light-induced photochemical processes of PSII. PSII is a light-driven water:plastoquinone oxidoreductase, using light energy to abstract electrons from H(2)O, generating O(2) and a proton gradient subsequently used for ATP formation. This chain is Photosystem II CP47 reaction center protein, found in Ranunculus macranthus (Large buttercup).